Consider the following 248-residue polypeptide: 5'-nucleotidase SurE (248 aa).

Residues D8, D9, S39, and N91 each contribute to the a divalent metal cation site.

The protein belongs to the SurE nucleotidase family. The cofactor is a divalent metal cation.

It localises to the cytoplasm. The catalysed reaction is a ribonucleoside 5'-phosphate + H2O = a ribonucleoside + phosphate. Functionally, nucleotidase that shows phosphatase activity on nucleoside 5'-monophosphates. In Neisseria gonorrhoeae (strain ATCC 700825 / FA 1090), this protein is 5'-nucleotidase SurE.